Here is a 373-residue protein sequence, read N- to C-terminus: Chaperone protein DnaJ (373 aa).

The J domain occupies 4 to 68 (NYYQILGVSK…QKRAAYDRLG (65 aa)). The CR-type zinc-finger motif lies at 136–214 (GIEKNISFSS…CHGMGRYHKQ (79 aa)). 8 residues coordinate Zn(2+): Cys-149, Cys-152, Cys-166, Cys-169, Cys-188, Cys-191, Cys-202, and Cys-205. CXXCXGXG motif repeat units follow at residues 149–156 (CDTCHGSG), 166–173 (CDACSGVG), 188–195 (CHKCQGNG), and 202–209 (CKKCHGMG).

The protein belongs to the DnaJ family. In terms of assembly, homodimer. Zn(2+) is required as a cofactor.

The protein localises to the cytoplasm. In terms of biological role, participates actively in the response to hyperosmotic and heat shock by preventing the aggregation of stress-denatured proteins and by disaggregating proteins, also in an autonomous, DnaK-independent fashion. Unfolded proteins bind initially to DnaJ; upon interaction with the DnaJ-bound protein, DnaK hydrolyzes its bound ATP, resulting in the formation of a stable complex. GrpE releases ADP from DnaK; ATP binding to DnaK triggers the release of the substrate protein, thus completing the reaction cycle. Several rounds of ATP-dependent interactions between DnaJ, DnaK and GrpE are required for fully efficient folding. Also involved, together with DnaK and GrpE, in the DNA replication of plasmids through activation of initiation proteins. The polypeptide is Chaperone protein DnaJ (Rickettsia africae (strain ESF-5)).